The chain runs to 307 residues: N-acetylglucosaminyl-diphospho-decaprenol L-rhamnosyltransferase (307 aa).

The protein belongs to the glycosyltransferase 2 family. The cofactor is Mn(2+). Requires Mg(2+) as cofactor.

The catalysed reaction is N-acetyl-alpha-D-glucosaminyl-1-diphospho-trans,octa-cis-decaprenol + dTDP-beta-L-rhamnose = alpha-L-rhamnosyl-(1-&gt;3)-N-acetyl-alpha-D-glucosaminyl-diphospho-trans,octa-cis-decaprenol + dTDP + H(+). Its function is as follows. Involved in the biosynthesis of the mycolylarabinogalactan-peptidoglycan (mAGP) complex, an essential component of the mycobacterial cell wall. Catalyzes the transfer of the rhamnosyl moiety from dTDP-rhamnosyl (dTDP-Rha) onto the decaprenyl-pyrophosphoryl-GlcNAc (C50-PP-GlcNAc), yielding rhamnosyl-decaprenyl-pyrophosphoryl-GlcNAc (Rha-C50-PP-GlcNAc). The sequence is that of N-acetylglucosaminyl-diphospho-decaprenol L-rhamnosyltransferase (wbbL) from Mycobacterium tuberculosis (strain CDC 1551 / Oshkosh).